Here is a 662-residue protein sequence, read N- to C-terminus: DNA ligase (662 aa).

NAD(+) contacts are provided by residues D31–D35 and S79–L80. K121 functions as the N6-AMP-lysine intermediate in the catalytic mechanism. NAD(+) contacts are provided by R143, E177, and K313. Positions 406, 409, 422, and 428 each coordinate Zn(2+). A BRCT domain is found at V586–I662.

This sequence belongs to the NAD-dependent DNA ligase family. LigA subfamily. Mg(2+) serves as cofactor. The cofactor is Mn(2+).

The catalysed reaction is NAD(+) + (deoxyribonucleotide)n-3'-hydroxyl + 5'-phospho-(deoxyribonucleotide)m = (deoxyribonucleotide)n+m + AMP + beta-nicotinamide D-nucleotide.. DNA ligase that catalyzes the formation of phosphodiester linkages between 5'-phosphoryl and 3'-hydroxyl groups in double-stranded DNA using NAD as a coenzyme and as the energy source for the reaction. It is essential for DNA replication and repair of damaged DNA. The polypeptide is DNA ligase (Clostridium perfringens (strain 13 / Type A)).